The primary structure comprises 917 residues: Translation initiation factor IF-2 (917 aa).

Residues 241-312 form a disordered region; that stretch reads EEAKKGTLHK…GGWRSGGGRK (72 aa). A compositionally biased stretch (basic and acidic residues) spans 252 to 262; the sequence is AKAEGAEDKKK. Residues 274 to 283 are compositionally biased toward polar residues; it reads SSETSSTWQE. Gly residues predominate over residues 298–308; the sequence is TSGGVGGWRSG. The tr-type G domain occupies 415–582; the sequence is PRPPVVTVMG…NVLLQAEILE (168 aa). A G1 region spans residues 424-431; it reads GHVDHGKT. 424 to 431 lines the GTP pocket; the sequence is GHVDHGKT. The tract at residues 449–453 is G2; sequence GITQH. Residues 470 to 473 form a G3 region; the sequence is DTPG. Residues 470–474 and 524–527 contribute to the GTP site; these read DTPGH and NKID. The segment at 524-527 is G4; the sequence is NKID. The tract at residues 560–562 is G5; the sequence is SAK.

Belongs to the TRAFAC class translation factor GTPase superfamily. Classic translation factor GTPase family. IF-2 subfamily.

It is found in the cytoplasm. Its function is as follows. One of the essential components for the initiation of protein synthesis. Protects formylmethionyl-tRNA from spontaneous hydrolysis and promotes its binding to the 30S ribosomal subunits. Also involved in the hydrolysis of GTP during the formation of the 70S ribosomal complex. The chain is Translation initiation factor IF-2 from Polynucleobacter necessarius subsp. necessarius (strain STIR1).